Here is a 277-residue protein sequence, read N- to C-terminus: Uridine phosphorylase (277 aa).

The protein belongs to the PNP/UDP phosphorylase family.

The protein localises to the cytoplasm. It carries out the reaction uridine + phosphate = alpha-D-ribose 1-phosphate + uracil. It participates in pyrimidine metabolism; UMP biosynthesis via salvage pathway; uracil from uridine (phosphorylase route): step 1/1. In terms of biological role, catalyzes the reversible phosphorylytic cleavage of uridine to uracil and ribose-1-phosphate. The protein is Uridine phosphorylase of Thermococcus kodakarensis (strain ATCC BAA-918 / JCM 12380 / KOD1) (Pyrococcus kodakaraensis (strain KOD1)).